A 387-amino-acid polypeptide reads, in one-letter code: 3-hydroxy-D-aspartate aldolase (387 aa).

Lysine 62 bears the N6-(pyridoxal phosphate)lysine mark. Residues glutamine 85, threonine 238, 256–257 (GS), and tyrosine 265 each bind pyridoxal 5'-phosphate. The Mg(2+) site is built by histidine 355 and aspartate 357.

It belongs to the DSD1 family. Homodimer. Requires pyridoxal 5'-phosphate as cofactor. It depends on Mg(2+) as a cofactor.

It carries out the reaction (3S)-3-hydroxy-D-aspartate = glyoxylate + glycine. The catalysed reaction is (3R)-3-hydroxy-D-aspartate = glyoxylate + glycine. Its function is as follows. Catalyzes the condensation of glyoxylate and glycine into (2R,3S)-beta-hydroxyaspartate ((3S)-3-hydroxy-D-aspartate). Is essential for the growth of P.denitrificans in the presence of glycolate and glyoxylate since it functions in glyoxylate assimilation via the beta-hydroxyaspartate cycle (BHAC). Is also able to catalyze the reverse reaction in vitro, i.e. the cleavage of (3S)-3-hydroxy-D-aspartate, and that of D-threonine to a lesser extent. This Paracoccus denitrificans (strain Pd 1222) protein is 3-hydroxy-D-aspartate aldolase.